We begin with the raw amino-acid sequence, 161 residues long: Large-conductance mechanosensitive channel (161 aa).

The next 2 helical transmembrane spans lie at 14 to 34 (VVDM…VNTL) and 85 to 105 (GLFL…FILV).

It belongs to the MscL family. As to quaternary structure, homopentamer.

The protein resides in the cell inner membrane. Its function is as follows. Channel that opens in response to stretch forces in the membrane lipid bilayer. May participate in the regulation of osmotic pressure changes within the cell. This chain is Large-conductance mechanosensitive channel, found in Chlorobium luteolum (strain DSM 273 / BCRC 81028 / 2530) (Pelodictyon luteolum).